A 323-amino-acid polypeptide reads, in one-letter code: Pantothenate kinase (323 aa).

Residue 101–108 (GSVAVGKS) coordinates ATP.

This sequence belongs to the prokaryotic pantothenate kinase family.

It localises to the cytoplasm. The catalysed reaction is (R)-pantothenate + ATP = (R)-4'-phosphopantothenate + ADP + H(+). The protein operates within cofactor biosynthesis; coenzyme A biosynthesis; CoA from (R)-pantothenate: step 1/5. In Paenarthrobacter aurescens (strain TC1), this protein is Pantothenate kinase.